A 312-amino-acid polypeptide reads, in one-letter code: Coiled-coil domain-containing protein 160 homolog (312 aa).

Residues 126–281 (SEGAKFKNQL…EERKREKTHS (156 aa)) adopt a coiled-coil conformation.

Belongs to the CCDC160 family.

This chain is Coiled-coil domain-containing protein 160 homolog, found in Xenopus tropicalis (Western clawed frog).